A 425-amino-acid polypeptide reads, in one-letter code: Serine--tRNA ligase (425 aa).

230–232 provides a ligand contact to L-serine; sequence TGE. 261–263 lines the ATP pocket; the sequence is RKE. Glu284 is an L-serine binding site. 348-351 serves as a coordination point for ATP; it reads EISS. An L-serine-binding site is contributed by Ser385.

This sequence belongs to the class-II aminoacyl-tRNA synthetase family. Type-1 seryl-tRNA synthetase subfamily. As to quaternary structure, homodimer. The tRNA molecule binds across the dimer.

The protein resides in the cytoplasm. It carries out the reaction tRNA(Ser) + L-serine + ATP = L-seryl-tRNA(Ser) + AMP + diphosphate + H(+). It catalyses the reaction tRNA(Sec) + L-serine + ATP = L-seryl-tRNA(Sec) + AMP + diphosphate + H(+). Its pathway is aminoacyl-tRNA biosynthesis; selenocysteinyl-tRNA(Sec) biosynthesis; L-seryl-tRNA(Sec) from L-serine and tRNA(Sec): step 1/1. In terms of biological role, catalyzes the attachment of serine to tRNA(Ser). Is also able to aminoacylate tRNA(Sec) with serine, to form the misacylated tRNA L-seryl-tRNA(Sec), which will be further converted into selenocysteinyl-tRNA(Sec). The protein is Serine--tRNA ligase of Wolbachia sp. subsp. Brugia malayi (strain TRS).